Here is a 380-residue protein sequence, read N- to C-terminus: Acyl-coenzyme A diphosphatase SCS3 (380 aa).

At 1–7 (MSSKWFN) the chain is on the cytoplasmic side. The helical transmembrane segment at 8-28 (AIHLLVCPLTVLVGYLMNAYG) threads the bilayer. Residues 29–43 (YGAALQATLNKDGLV) are Lumenal-facing. A helical transmembrane segment spans residues 44-64 (NAMLVKKGWFWTSLVGWWCII). Over 65–88 (RYRAVPGATGRDRRHIVQSFKRYA) the chain is Cytoplasmic. A helical transmembrane segment spans residues 89 to 109 (ILTVWWYVFTQGIWFGVGPIM). The Lumenal portion of the chain corresponds to 110-233 (DLVFVYTGGH…GHWAGGHDPS (124 aa)). A helical transmembrane segment spans residues 234–254 (GHVFLATLMCMFLLGELRVFG). Histidine 235 is a catalytic residue. Residues 255–325 (RRALAHLYAQ…LTRCIACDHP (71 aa)) lie on the Cytoplasmic side of the membrane. A helical membrane pass occupies residues 326–346 (VIILLTLLVTWLWQLLLTAVA). At 347–356 (SRFHTVREHM) the chain is on the lumenal side. Residue histidine 350 is part of the active site. A helical membrane pass occupies residues 357–377 (SGLLAAYIVTGLVYARDAAAL). Topologically, residues 378–380 (RPV) are cytoplasmic.

The protein belongs to the FIT family. Fungal FIT2B/SCS3 subfamily.

Its subcellular location is the endoplasmic reticulum membrane. It carries out the reaction an acyl-CoA + H2O = an acyl-4'-phosphopantetheine + adenosine 3',5'-bisphosphate + 2 H(+). The enzyme catalyses (9Z)-octadecenoyl-CoA + H2O = S-(9Z-octadecenoyl)-4'-phosphopantetheine + adenosine 3',5'-bisphosphate + 2 H(+). It catalyses the reaction (5Z,8Z,11Z,14Z)-eicosatetraenoyl-CoA + H2O = S-(5Z,8Z,11Z,14Z-eicosatetraenoyl)-4'-phosphopantetheine + adenosine 3',5'-bisphosphate + 2 H(+). The catalysed reaction is hexadecanoyl-CoA + H2O = S-hexadecanoyl-4'-phosphopantetheine + adenosine 3',5'-bisphosphate + 2 H(+). In terms of biological role, fatty acyl-coenzyme A (CoA) diphosphatase that hydrolyzes fatty acyl-CoA to yield acyl-4'-phosphopantetheine and adenosine 3',5'-bisphosphate. Preferentially hydrolyzes unsaturated long-chain acyl-CoA substrates in the endoplasmic reticulum (ER) lumen. This catalytic activity is required for maintaining ER structure and for lipid droplets (LDs) biogenesis, which are lipid storage organelles involved in maintaining lipid and energy homeostasis. May directly bind to diacylglycerol (DAGs) and triacylglycerol, which is also important for LD biogenesis. May support directional budding of nacent LDs from the ER into the cytosol by reducing DAG levels at sites of LD formation. May play a role in the regulation of cell morphology and cytoskeletal organization. Involved in phospholipid biosynthesis. The sequence is that of Acyl-coenzyme A diphosphatase SCS3 from Saccharomyces cerevisiae (strain ATCC 204508 / S288c) (Baker's yeast).